A 158-amino-acid polypeptide reads, in one-letter code: Cytochrome c-type biogenesis protein CcmE (158 aa).

Residues 1-7 lie on the Cytoplasmic side of the membrane; it reads MKPRHRR. A helical; Signal-anchor for type II membrane protein membrane pass occupies residues 8–28; sequence LTLIALVLGGLGLSAGLALTA. Residues 29 to 158 are Periplasmic-facing; the sequence is FQDNLVFFFT…DGHPETTTAY (130 aa). The heme site is built by His-123 and Tyr-127. Residues 138–158 form a disordered region; sequence RIGQGNGTPGPDGHPETTTAY.

This sequence belongs to the CcmE/CycJ family.

Its subcellular location is the cell inner membrane. Functionally, heme chaperone required for the biogenesis of c-type cytochromes. Transiently binds heme delivered by CcmC and transfers the heme to apo-cytochromes in a process facilitated by CcmF and CcmH. This chain is Cytochrome c-type biogenesis protein CcmE, found in Alkalilimnicola ehrlichii (strain ATCC BAA-1101 / DSM 17681 / MLHE-1).